Here is a 156-residue protein sequence, read N- to C-terminus: Phosphopantetheine adenylyltransferase (156 aa).

It belongs to the eukaryotic CoaD family.

Its subcellular location is the cytoplasm. The enzyme catalyses (R)-4'-phosphopantetheine + ATP + H(+) = 3'-dephospho-CoA + diphosphate. It functions in the pathway cofactor biosynthesis; coenzyme A biosynthesis. Its function is as follows. Reversibly transfers an adenylyl group from ATP to 4'-phosphopantetheine, yielding dephospho-CoA (dPCoA) and pyrophosphate. The sequence is that of Phosphopantetheine adenylyltransferase from Methanosarcina acetivorans (strain ATCC 35395 / DSM 2834 / JCM 12185 / C2A).